The chain runs to 379 residues: UDP-4-amino-4-deoxy-L-arabinose--oxoglutarate aminotransferase (379 aa).

The residue at position 182 (Lys-182) is an N6-(pyridoxal phosphate)lysine.

This sequence belongs to the DegT/DnrJ/EryC1 family. ArnB subfamily. In terms of assembly, homodimer. Pyridoxal 5'-phosphate serves as cofactor.

The catalysed reaction is UDP-4-amino-4-deoxy-beta-L-arabinose + 2-oxoglutarate = UDP-beta-L-threo-pentopyranos-4-ulose + L-glutamate. It functions in the pathway nucleotide-sugar biosynthesis; UDP-4-deoxy-4-formamido-beta-L-arabinose biosynthesis; UDP-4-deoxy-4-formamido-beta-L-arabinose from UDP-alpha-D-glucuronate: step 2/3. The protein operates within bacterial outer membrane biogenesis; lipopolysaccharide biosynthesis. In terms of biological role, catalyzes the conversion of UDP-4-keto-arabinose (UDP-Ara4O) to UDP-4-amino-4-deoxy-L-arabinose (UDP-L-Ara4N). The modified arabinose is attached to lipid A and is required for resistance to polymyxin and cationic antimicrobial peptides. This Salmonella agona (strain SL483) protein is UDP-4-amino-4-deoxy-L-arabinose--oxoglutarate aminotransferase.